The chain runs to 491 residues: Probable diguanylate cyclase CdgI (491 aa).

Residues 1–54 lie on the Cytoplasmic side of the membrane; the sequence is MIQSTRISMGLFFKYFLSLTKIDPGQNYISLPSIKSSTHIALLFMVSMGTQKLK. Residues 55-75 form a helical membrane-spanning segment; it reads AQSFFIFSLLLTLILFCITTL. Topologically, residues 76–89 are periplasmic; sequence YNENTNVKLIPQMN. The helical transmembrane segment at 90 to 110 threads the bilayer; sequence YLMVVVALFFLNAVIFLFMLM. Topologically, residues 111–121 are cytoplasmic; the sequence is KYFTNKQILPT. The helical transmembrane segment at 122–142 threads the bilayer; it reads LILSLAFLSGLIYLVETIVII. Residues 143–158 lie on the Periplasmic side of the membrane; it reads HKPINGSTLIQTKSND. A helical membrane pass occupies residues 159–179; it reads VSIFYIFRQLSFICLTSLALF. At 180–193 the chain is on the cytoplasmic side; that stretch reads CYGKDNILDNNKKK. Residues 194–214 traverse the membrane as a helical segment; sequence TGILLLALIPFLVFPLLAHNL. Over 215–236 the chain is Periplasmic; the sequence is SSYNADYSLYVVDYCPDNHTAT. The chain crosses the membrane as a helical span at residues 237–257; sequence WGINYTKILVCLWAFLLFFII. The Cytoplasmic segment spans residues 258 to 265; it reads MRTRLASE. The helical transmembrane segment at 266–286 threads the bilayer; that stretch reads LWPLIALLCLASLCCNLLLLT. Topologically, residues 287-293 are periplasmic; that stretch reads LDEYNYT. The helical transmembrane segment at 294-314 threads the bilayer; it reads IWYISRGIEVSSKLFVVSFLI. Residues 315 to 491 are Cytoplasmic-facing; the sequence is YNIFQELQLS…GGNKVIIHHI (177 aa). The GGDEF domain occupies 356 to 491; it reads KDFCVMLVDI…GGNKVIIHHI (136 aa). 2 residues coordinate Mg(2+): Asp364 and Ile365. 3 residues coordinate substrate: Asn372, His377, and Asp381. Mg(2+) is bound at residue Glu407. The active-site Proton acceptor is the Glu407. Arg427 lines the substrate pocket.

In terms of assembly, homodimer. It depends on Mg(2+) as a cofactor.

Its subcellular location is the cell inner membrane. The enzyme catalyses 2 GTP = 3',3'-c-di-GMP + 2 diphosphate. Its pathway is purine metabolism; 3',5'-cyclic di-GMP biosynthesis. Its function is as follows. Catalyzes the synthesis of cyclic-di-GMP (c-di-GMP) via the condensation of 2 GTP molecules. The polypeptide is Probable diguanylate cyclase CdgI (Escherichia coli (strain K12)).